A 63-amino-acid chain; its full sequence is Large ribosomal subunit protein uL30 (63 aa).

Belongs to the universal ribosomal protein uL30 family. As to quaternary structure, part of the 50S ribosomal subunit.

This Rickettsia akari (strain Hartford) protein is Large ribosomal subunit protein uL30.